Here is a 132-residue protein sequence, read N- to C-terminus: Small ribosomal subunit protein uS8 (132 aa).

It belongs to the universal ribosomal protein uS8 family. Part of the 30S ribosomal subunit. Contacts proteins S5 and S12.

In terms of biological role, one of the primary rRNA binding proteins, it binds directly to 16S rRNA central domain where it helps coordinate assembly of the platform of the 30S subunit. The chain is Small ribosomal subunit protein uS8 from Francisella tularensis subsp. tularensis (strain FSC 198).